Consider the following 234-residue polypeptide: DNA repair protein RecO (234 aa).

Belongs to the RecO family.

Its function is as follows. Involved in DNA repair and RecF pathway recombination. This chain is DNA repair protein RecO, found in Hamiltonella defensa subsp. Acyrthosiphon pisum (strain 5AT).